The primary structure comprises 680 residues: PAN2-PAN3 deadenylation complex subunit PAN3 (680 aa).

Disordered stretches follow at residues 1-26, 51-87, and 99-120; these read MATT…RADT, HDQT…SKKT, and FTPR…TDIP. The C3H1-type zinc-finger motif lies at 25 to 54; the sequence is DTKDTLCRNILIYGHCRYEDAGCAFNHDQT. Residues 52–64 show a composition bias toward basic and acidic residues; the sequence is DQTKKSPKPDATT. The PABPC-interacting motif-2 (PAM-2) motif lies at 62-82; sequence ATTRKTLNVDSAPFTPAVSSQ. Low complexity predominate over residues 99–117; it reads FTPRATAATPTGTPTAQET. The tract at residues 256–522 is pseudokinase domain; sequence QTMTGTAALQ…TVKNLVAGIN (267 aa). ATP contacts are provided by residues arginine 311, 360-367, and 422-423; these read EYYPLAET and TK. A coiled-coil region spans residues 523 to 561; it reads EHVMTAFDAQQRQSDMLYSELYREVENGRVLRLLMKLAT. Residues 562–680 are knob domain; it reads INERTEYDKD…VHHPSHRDRF (119 aa). Gly residues predominate over residues 655-669; it reads SGNGRGGPVASGSGH. The segment at 655-680 is disordered; the sequence is SGNGRGGPVASGSGHGVHHPSHRDRF. A compositionally biased stretch (basic residues) spans 670-680; sequence GVHHPSHRDRF.

The protein belongs to the protein kinase superfamily. PAN3 family. Homodimer. Forms a heterotrimer with a catalytic subunit PAN2 to form the poly(A)-nuclease (PAN) deadenylation complex. Interacts (via PAM-2 motif) with poly(A)-binding protein PAB1 (via PABC domain), conferring substrate specificity of the enzyme complex.

The protein resides in the cytoplasm. Its function is as follows. Regulatory subunit of the poly(A)-nuclease (PAN) deadenylation complex, one of two cytoplasmic mRNA deadenylases involved in mRNA turnover. PAN specifically shortens poly(A) tails of RNA and the activity is stimulated by poly(A)-binding protein PAB1. PAN deadenylation is followed by rapid degradation of the shortened mRNA tails by the CCR4-NOT complex. Deadenylated mRNAs are then degraded by two alternative mechanisms, namely exosome-mediated 3'-5' exonucleolytic degradation, or deadenylation-dependent mRNA decaping and subsequent 5'-3' exonucleolytic degradation by XRN1. May also be involved in post-transcriptional maturation of mRNA poly(A) tails. PAN3 acts as a positive regulator for PAN activity, recruiting the catalytic subunit PAN2 to mRNA via its interaction with RNA and with PAB1. This chain is PAN2-PAN3 deadenylation complex subunit PAN3, found in Pyricularia oryzae (strain 70-15 / ATCC MYA-4617 / FGSC 8958) (Rice blast fungus).